A 284-amino-acid chain; its full sequence is Bifunctional protein FolD (284 aa).

NADP(+)-binding positions include 166-168 (GAS) and Ile-232.

The protein belongs to the tetrahydrofolate dehydrogenase/cyclohydrolase family. In terms of assembly, homodimer.

It carries out the reaction (6R)-5,10-methylene-5,6,7,8-tetrahydrofolate + NADP(+) = (6R)-5,10-methenyltetrahydrofolate + NADPH. The enzyme catalyses (6R)-5,10-methenyltetrahydrofolate + H2O = (6R)-10-formyltetrahydrofolate + H(+). Its pathway is one-carbon metabolism; tetrahydrofolate interconversion. Its function is as follows. Catalyzes the oxidation of 5,10-methylenetetrahydrofolate to 5,10-methenyltetrahydrofolate and then the hydrolysis of 5,10-methenyltetrahydrofolate to 10-formyltetrahydrofolate. This is Bifunctional protein FolD from Pseudomonas putida (strain W619).